An 820-amino-acid chain; its full sequence is MAVSPHKTYPIVITHGEKYTLFNDESIGKGAYSEVYRGRTESGRLVAVKTACKKLEVAAIGIEIEILKKLKGASNIVQYFGSNHTKMAPGSVTSETISFAMEYASSSLEAEMRRPKNHRGLSSNALIDLVVDCSMALSALREHNIAHRDIKHMNILLFPGTPTRGRRSTHLFKLCDMGCSKSLSENSSHEMRTLVGTPNLLHPFLAHEMVDPLMAQNRHNWKTKSAYTSEQCDLWALGCTLYFCATGKFPFEHERNNKSLYHKAVVALTQNPDAIAMVLVQKGRDPGRRTDIFEFQPVTELPAKFTRYPKWLVSTMTCLLRSFFHEPSIEYYAKVADAMRNSKRRTFSSVDQMSIVEHTDMSNVPHLGFSIPSISKCLGYPEGTDILLLSNTSTHYLDSKQKSVDGLPDDLYLVVPQTSHVDMRKILARNIEFHEFDDMTDRKLSEIRIKKCYEGLSMLTEIDEYLALFDRVSTILSTQFSLLVQELSQFERVQTASRFAVYVDMASVPLMLFDEANPETKMISDQCIQQAKRAREELERHAKVSMDIEACAKQLSKDAEDLRLEDMDLPGICEEIESYVFYDKQAILSTQKYSQELVELCLKRRNNIMEQIFNSPDRINKSKLNKAMNLAASLSQLRSNYRKLQDMISECVDLLEKPFQEMKDTVNRYLQAQGCSRNTMQKSMHLLRPEFHESQIRIKKTTKSCRKLIDQLNIELDQLGFVRLGDILIKAESEQTLTRSEEIQETQVVSFFCQAESSPNKEQFPKPEQDSILESSIDEGSTSFESTPPSSPPDVGSNNYFQAVFQYFAKPTSSPSSSAK.

Positions 21–299 (LFNDESIGKG…TDIFEFQPVT (279 aa)) constitute a Protein kinase domain. ATP contacts are provided by residues 27 to 35 (IGKGAYSEV) and K49. D149 acts as the Proton acceptor in catalysis. The tract at residues 758 to 798 (SPNKEQFPKPEQDSILESSIDEGSTSFESTPPSSPPDVGSN) is disordered.

It belongs to the protein kinase superfamily. Ser/Thr protein kinase family. Interacts with allo-1 (via N-terminus); the interaction is direct. In terms of tissue distribution, expressed in oocytes.

The protein resides in the cytoplasm. The catalysed reaction is L-seryl-[protein] + ATP = O-phospho-L-seryl-[protein] + ADP + H(+). It catalyses the reaction L-threonyl-[protein] + ATP = O-phospho-L-threonyl-[protein] + ADP + H(+). Serine/threonine-protein kinase, which plays a role in regulating allophagy, an autophagic process in which paternal organelles, including mitochondria and membranous organelles, are degraded in embryos. Phosphorylates the allophagy receptor allo-1, which is required for allophagy. The protein is Inhibitor of nuclear factor kappa-B kinase epsilon subunit homolog 1 of Caenorhabditis elegans.